The sequence spans 156 residues: B3 domain-containing protein At5g26805 (156 aa).

Positions 57–155 form a DNA-binding region, TF-B3; sequence KFQLPMEKIR…MFCFSVLDGR (99 aa).

The protein localises to the nucleus. This is B3 domain-containing protein At5g26805 from Arabidopsis thaliana (Mouse-ear cress).